A 447-amino-acid polypeptide reads, in one-letter code: DNA primase DnaG (447 aa).

Positions 200–274 (DSIIVVEGRA…DIDYVARAPE (75 aa)) constitute a Toprim domain. 3 residues coordinate Mg(2+): E206, D248, and D250.

It belongs to the archaeal DnaG primase family. In terms of assembly, forms a ternary complex with MCM helicase and DNA. Component of the archaeal exosome complex. Requires Mg(2+) as cofactor.

It carries out the reaction ssDNA + n NTP = ssDNA/pppN(pN)n-1 hybrid + (n-1) diphosphate.. Functionally, RNA polymerase that catalyzes the synthesis of short RNA molecules used as primers for DNA polymerase during DNA replication. Also part of the exosome, which is a complex involved in RNA degradation. Acts as a poly(A)-binding protein that enhances the interaction between heteromeric, adenine-rich transcripts and the exosome. In Pyrococcus abyssi (strain GE5 / Orsay), this protein is DNA primase DnaG.